The primary structure comprises 252 residues: tRNA pseudouridine synthase A (252 aa).

The active-site Nucleophile is Asp52. Tyr110 contributes to the substrate binding site.

This sequence belongs to the tRNA pseudouridine synthase TruA family. Homodimer.

The enzyme catalyses uridine(38/39/40) in tRNA = pseudouridine(38/39/40) in tRNA. In terms of biological role, formation of pseudouridine at positions 38, 39 and 40 in the anticodon stem and loop of transfer RNAs. This Syntrophotalea carbinolica (strain DSM 2380 / NBRC 103641 / GraBd1) (Pelobacter carbinolicus) protein is tRNA pseudouridine synthase A.